The sequence spans 101 residues: Small ubiquitin-related modifier 1 (101 aa).

Ser-2 bears the N-acetylserine mark. Ser-2 carries the phosphoserine modification. Residue Lys-7 forms a Glycyl lysine isopeptide (Lys-Gly) (interchain with G-Cter in SUMO1); alternate linkage. Lys-7 participates in a covalent cross-link: Glycyl lysine isopeptide (Lys-Gly) (interchain with G-Cter in SUMO2); alternate. Ser-9 is modified (phosphoserine). Glycyl lysine isopeptide (Lys-Gly) (interchain with G-Cter in SUMO2) cross-links involve residues Lys-16, Lys-17, and Lys-23. The region spanning 20–97 (EYIKLKVIGQ…IEVYHEQTGG (78 aa)) is the Ubiquitin-like domain. Lys-25 is covalently cross-linked (Glycyl lysine isopeptide (Lys-Gly) (interchain with G-Cter in SUMO1)). Position 32 is a phosphoserine (Ser-32). Glycyl lysine isopeptide (Lys-Gly) (interchain with G-Cter in SUMO2) cross-links involve residues Lys-37, Lys-39, Lys-45, and Lys-46. Gly-97 participates in a covalent cross-link: Glycyl lysine isopeptide (Gly-Lys) (interchain with K-? in acceptor proteins). The propeptide occupies 98-101 (HSTV).

Belongs to the ubiquitin family. SUMO subfamily. In terms of assembly, covalently attached to KCNB1; UBE2I increases cross-linking with KCNB1 and PIAS1 decreases cross-links with KCNB1. Interacts with SAE2, RANBP2, PIAS1 and PIAS2. Interacts with PRKN. Covalently attached to a number of proteins such as IKFZ1, PML, RANGAP1, HIPK2, SP100, p53, p73-alpha, MDM2, JUN, DNMT3B and TDG. Also interacts with HIF1A, HIPK2, HIPK3, CHD3, EXOSC9, RAD51 and RAD52. Interacts with USP25 (via ts SIM domain); the interaction weakly sumoylates USP25. Interacts with SIMC1, CASP8AP2, RNF111 and SOBP (via SIM domains). Interacts with BHLHE40/DEC1. Interacts with RWDD3. Interacts with UBE2I/UBC9 and this interaction is enhanced in the presence of RWDD3. Interacts with MTA1. Interacts with SENP2. Interacts with HINT1. In terms of processing, cleavage of precursor form by SENP1, SENP2 is necessary for function. Polymeric SUMO1 chains undergo polyubiquitination by RNF4.

It is found in the nucleus membrane. The protein resides in the nucleus speckle. It localises to the cytoplasm. Its subcellular location is the nucleus. The protein localises to the PML body. It is found in the cell membrane. Ubiquitin-like protein that can be covalently attached to proteins as a monomer or a lysine-linked polymer. Covalent attachment via an isopeptide bond to its substrates requires prior activation by the E1 complex SAE1-SAE2 and linkage to the E2 enzyme UBE2I, and can be promoted by E3 ligases such as PIAS1-4, RANBP2 or CBX4. This post-translational modification on lysine residues of proteins plays a crucial role in a number of cellular processes such as nuclear transport, DNA replication and repair, mitosis and signal transduction. Involved for instance in targeting RANGAP1 to the nuclear pore complex protein RANBP2. Covalently attached to the voltage-gated potassium channel KCNB1; this modulates the gating characteristics of KCNB1. Polymeric SUMO1 chains are also susceptible to polyubiquitination which functions as a signal for proteasomal degradation of modified proteins. May also regulate a network of genes involved in palate development. Covalently attached to ZFHX3. The protein is Small ubiquitin-related modifier 1 (SUMO1) of Cervus nippon (Sika deer).